The primary structure comprises 878 residues: Alanine--tRNA ligase (878 aa).

4 residues coordinate Zn(2+): His-565, His-569, Cys-667, and His-671.

The protein belongs to the class-II aminoacyl-tRNA synthetase family. Zn(2+) is required as a cofactor.

The protein resides in the cytoplasm. The catalysed reaction is tRNA(Ala) + L-alanine + ATP = L-alanyl-tRNA(Ala) + AMP + diphosphate. Functionally, catalyzes the attachment of alanine to tRNA(Ala) in a two-step reaction: alanine is first activated by ATP to form Ala-AMP and then transferred to the acceptor end of tRNA(Ala). Also edits incorrectly charged Ser-tRNA(Ala) and Gly-tRNA(Ala) via its editing domain. The polypeptide is Alanine--tRNA ligase (Desulforamulus reducens (strain ATCC BAA-1160 / DSM 100696 / MI-1) (Desulfotomaculum reducens)).